A 782-amino-acid polypeptide reads, in one-letter code: Formin-like protein 9 (782 aa).

The N-terminal stretch at 1–24 is a signal peptide; the sequence is MQNFWFAIFFFLLTCAPPSPLSYA. The chain crosses the membrane as a helical span at residues 102-122; sequence LLLPALSAVLVIATVIGLALF. Disordered stretches follow at residues 191–223, 264–287, and 387–407; these read DSPE…EEEE, MSPP…RLRV, and SSSQ…PPLV. Over residues 214–223 the composition is skewed to acidic residues; that stretch reads EVNEEDEEEE. The segment covering 396–407 has biased composition (pro residues); sequence ALPPPTRPPPLV. The 377-residue stretch at 406–782 folds into the FH2 domain; that stretch reads LVPPSQPFVV…LDQVCKEMGD (377 aa).

The protein belongs to the formin-like family. Class-I subfamily.

The protein resides in the membrane. In terms of biological role, might be involved in the organization and polarity of the actin cytoskeleton. This is Formin-like protein 9 (FH9) from Arabidopsis thaliana (Mouse-ear cress).